Consider the following 391-residue polypeptide: S-adenosylmethionine synthase (391 aa).

Position 14 (H14) interacts with ATP. D16 is a binding site for Mg(2+). E42 contacts K(+). E55 and Q98 together coordinate L-methionine. The flexible loop stretch occupies residues 98–108; sequence QSVDIAMGVDE. Residues 172–174, 238–239, D247, 253–254, A270, and K274 contribute to the ATP site; these read DGK, RF, and RK. D247 is an L-methionine binding site. L-methionine is bound at residue K278.

This sequence belongs to the AdoMet synthase family. In terms of assembly, homotetramer; dimer of dimers. Requires Mg(2+) as cofactor. The cofactor is K(+).

Its subcellular location is the cytoplasm. The catalysed reaction is L-methionine + ATP + H2O = S-adenosyl-L-methionine + phosphate + diphosphate. Its pathway is amino-acid biosynthesis; S-adenosyl-L-methionine biosynthesis; S-adenosyl-L-methionine from L-methionine: step 1/1. Functionally, catalyzes the formation of S-adenosylmethionine (AdoMet) from methionine and ATP. The overall synthetic reaction is composed of two sequential steps, AdoMet formation and the subsequent tripolyphosphate hydrolysis which occurs prior to release of AdoMet from the enzyme. The polypeptide is S-adenosylmethionine synthase (Clostridium botulinum (strain Langeland / NCTC 10281 / Type F)).